The sequence spans 97 residues: Large ribosomal subunit protein bL21 (97 aa).

This sequence belongs to the bacterial ribosomal protein bL21 family. In terms of assembly, part of the 50S ribosomal subunit. Contacts protein L20.

Its function is as follows. This protein binds to 23S rRNA in the presence of protein L20. The protein is Large ribosomal subunit protein bL21 of Persephonella marina (strain DSM 14350 / EX-H1).